The sequence spans 254 residues: Ubiquinone biosynthesis O-methyltransferase (254 aa).

Positions 47, 78, 99, and 141 each coordinate S-adenosyl-L-methionine.

This sequence belongs to the methyltransferase superfamily. UbiG/COQ3 family.

The enzyme catalyses a 3-demethylubiquinol + S-adenosyl-L-methionine = a ubiquinol + S-adenosyl-L-homocysteine + H(+). The catalysed reaction is a 3-(all-trans-polyprenyl)benzene-1,2-diol + S-adenosyl-L-methionine = a 2-methoxy-6-(all-trans-polyprenyl)phenol + S-adenosyl-L-homocysteine + H(+). Its pathway is cofactor biosynthesis; ubiquinone biosynthesis. Functionally, O-methyltransferase that catalyzes the 2 O-methylation steps in the ubiquinone biosynthetic pathway. The chain is Ubiquinone biosynthesis O-methyltransferase from Rhodopseudomonas palustris (strain BisB18).